A 1421-amino-acid polypeptide reads, in one-letter code: ALK tyrosine kinase receptor homolog scd-2 (1421 aa).

The first 20 residues, 1-20 (MRKRRLWWFVVLFRVTLVGA), serve as a signal peptide directing secretion. Topologically, residues 21–903 (ILPNETFDVR…DTCEEIQIWT (883 aa)) are extracellular. Asn24, Asn44, Asn70, Asn83, Asn119, and Asn201 each carry an N-linked (GlcNAc...) asparagine glycan. The region spanning 300–338 (QCSRGDQFLCSISANTRCLQNAQCDSRIDCDDESDEMDC) is the LDL-receptor class A domain. 3 cysteine pairs are disulfide-bonded: Cys301-Cys317, Cys309-Cys329, and Cys323-Cys338. The MAM domain occupies 339-542 (GNINGTMCDF…NLSFSPTCFE (204 aa)). Residues Asn342, Asn362, Asn495, Asn533, Asn546, Asn633, Asn726, Asn793, Asn849, Asn873, and Asn893 are each glycosylated (N-linked (GlcNAc...) asparagine). The helical transmembrane segment at 904–924 (LYNITFLIFAALTIIGALFVV) threads the bilayer. The Cytoplasmic segment spans residues 925–1421 (YHYRNREKQM…SVPLLECQTR (497 aa)). One can recognise a Protein kinase domain in the interval 976–1261 (IERGRVLGRG…GMPFPIHPAV (286 aa)). ATP-binding positions include 982 to 990 (LGRGNFGEV) and Lys1003. The Proton acceptor role is filled by Asp1106.

This sequence belongs to the protein kinase superfamily. Tyr protein kinase family. Insulin receptor subfamily. Interacts (via cytoplasmic domain) with fsn-1 (via SPRY domain). As to expression, expressed in AIA sensory neurons.

Its subcellular location is the cell membrane. It catalyses the reaction L-tyrosyl-[protein] + ATP = O-phospho-L-tyrosyl-[protein] + ADP + H(+). In terms of biological role, probable tyrosine-protein kinase receptor which regulates the dauer/non-dauer developmental decision probably by controlling daf-3 transcriptional activity in parallel or together with the TGF-beta pathway. Regulates integration of conflicting sensory cues in AIA interneurons. May act as a receptor for hen-1. In AWA neurons, together with hen-1, plays a role in regulating olfactory adaptation by controlling the forgetting sensory responses to odorants such as diacetyl. This Caenorhabditis elegans protein is ALK tyrosine kinase receptor homolog scd-2.